The sequence spans 305 residues: Glycine--tRNA ligase alpha subunit (305 aa).

It belongs to the class-II aminoacyl-tRNA synthetase family. Tetramer of two alpha and two beta subunits.

It localises to the cytoplasm. It carries out the reaction tRNA(Gly) + glycine + ATP = glycyl-tRNA(Gly) + AMP + diphosphate. In Streptococcus pneumoniae (strain P1031), this protein is Glycine--tRNA ligase alpha subunit.